We begin with the raw amino-acid sequence, 636 residues long: Nuclear receptor subfamily 2 group C member 1 (636 aa).

Residues 149–224 (VELCVVCGDK…LGMKQDSVQC (76 aa)) constitute a DNA-binding region (nuclear receptor). 2 NR C4-type zinc fingers span residues 152–172 (CVVCGDKASGRHYGAVTCEGC) and 188–207 (CRGSKDCVINKHYRNRCQYC). The NR LBD domain maps to 382 to 623 (ECVGSNSNLT…SIIPYILRME (242 aa)).

This sequence belongs to the nuclear hormone receptor family. NR2 subfamily.

The protein resides in the nucleus. Its function is as follows. Orphan nuclear receptor. Binds the IR7 element in the promoter of its own gene in an autoregulatory negative feedback mechanism. Primarily repressor of a broad range of genes. Binds to hormone response elements (HREs) consisting of two 5'-AGGTCA-3' half site direct repeat consensus sequences. In Xenopus tropicalis (Western clawed frog), this protein is Nuclear receptor subfamily 2 group C member 1.